Consider the following 294-residue polypeptide: tRNA dimethylallyltransferase (294 aa).

ATP is bound at residue 10 to 17 (GITASGKS). 12 to 17 (TASGKS) contributes to the substrate binding site. Residues 36–39 (DSKQ) are interaction with substrate tRNA.

Belongs to the IPP transferase family. In terms of assembly, monomer. It depends on Mg(2+) as a cofactor.

It carries out the reaction adenosine(37) in tRNA + dimethylallyl diphosphate = N(6)-dimethylallyladenosine(37) in tRNA + diphosphate. Its function is as follows. Catalyzes the transfer of a dimethylallyl group onto the adenine at position 37 in tRNAs that read codons beginning with uridine, leading to the formation of N6-(dimethylallyl)adenosine (i(6)A). The sequence is that of tRNA dimethylallyltransferase from Wolbachia sp. subsp. Drosophila simulans (strain wRi).